Consider the following 329-residue polypeptide: MKKILNGTDQVVEQMVEGLVKSHADVVHRVEGTRVIARNDKRPGKVGLVSGGGSGHEPAHAGYVGRGMLSAAVCGDVFTSPTPDQIYEGIKAADQGAGVLLIVKNYTGDVMNFEMAADLADADDIKVEQIVVDDDIAVEDSTFTTGRRGVAGTVLVHKIIGAAAEAGASLEELKALGEKVIASVKTLGVALSPCTVPEVGHPGFELGDDEIELGIGIHGEPGFTREKIMPSARLAKQLYERISSESKLLAGDKVVVLVNGMGATPLMEQYVFANDVHELLKNAGVQVEKTLVGDYMTSLEMAGLSLTILKLEDEKWVDMLKLPVDTIAW.

In terms of domain architecture, DhaK spans 7–329; the sequence is GTDQVVEQMV…LKLPVDTIAW (323 aa). Residues 53–56, lysine 104, and aspartate 109 contribute to the dihydroxyacetone site; that span reads GSGH. The active-site Proton acceptor is the histidine 56. Catalysis depends on histidine 218, which acts as the Tele-hemiaminal-histidine intermediate.

In terms of assembly, homodimer. The dihydroxyacetone kinase complex is composed of a homodimer of DhaM, a homodimer of DhaK and the subunit DhaL.

Its subcellular location is the cytoplasm. The catalysed reaction is dihydroxyacetone + phosphoenolpyruvate = dihydroxyacetone phosphate + pyruvate. It participates in polyol metabolism; glycerol degradation. Dihydroxyacetone binding subunit of the dihydroxyacetone kinase, which is responsible for the phosphoenolpyruvate (PEP)-dependent phosphorylation of dihydroxyacetone via a phosphoryl group transfer from DhaL-ATP. The polypeptide is PTS-dependent dihydroxyacetone kinase 1, dihydroxyacetone-binding subunit DhaK (Listeria innocua serovar 6a (strain ATCC BAA-680 / CLIP 11262)).